A 214-amino-acid polypeptide reads, in one-letter code: Adenylate kinase (214 aa).

Gly10–Thr15 is a binding site for ATP. Positions Ser30 to Val59 are NMP. AMP is bound by residues Thr31, Arg36, Lys57–Val59, Gly85–Arg88, and Gln92. Residues Gly122–Asp159 form an LID region. Residues Arg123 and Ser132–Tyr133 contribute to the ATP site. Residues Arg156 and Arg167 each coordinate AMP. Gln200 is an ATP binding site.

It belongs to the adenylate kinase family. As to quaternary structure, monomer.

The protein localises to the cytoplasm. The enzyme catalyses AMP + ATP = 2 ADP. Its pathway is purine metabolism; AMP biosynthesis via salvage pathway; AMP from ADP: step 1/1. Catalyzes the reversible transfer of the terminal phosphate group between ATP and AMP. Plays an important role in cellular energy homeostasis and in adenine nucleotide metabolism. In Haemophilus influenzae (strain PittEE), this protein is Adenylate kinase.